The sequence spans 130 residues: uncharacterized protein (130 aa).

Residue M1 is modified to N-acetylmethionine.

Homotetramer.

This is an uncharacterized protein from Arabidopsis thaliana (Mouse-ear cress).